The chain runs to 466 residues: Asparagine--tRNA ligase (466 aa).

Belongs to the class-II aminoacyl-tRNA synthetase family. As to quaternary structure, homodimer.

It localises to the cytoplasm. It catalyses the reaction tRNA(Asn) + L-asparagine + ATP = L-asparaginyl-tRNA(Asn) + AMP + diphosphate + H(+). In Pectobacterium atrosepticum (strain SCRI 1043 / ATCC BAA-672) (Erwinia carotovora subsp. atroseptica), this protein is Asparagine--tRNA ligase.